The following is a 250-amino-acid chain: 5'-nucleotidase SurE (250 aa).

Positions 9, 10, 40, and 92 each coordinate a divalent metal cation.

This sequence belongs to the SurE nucleotidase family. A divalent metal cation is required as a cofactor.

It is found in the cytoplasm. It carries out the reaction a ribonucleoside 5'-phosphate + H2O = a ribonucleoside + phosphate. In terms of biological role, nucleotidase that shows phosphatase activity on nucleoside 5'-monophosphates. In Shewanella pealeana (strain ATCC 700345 / ANG-SQ1), this protein is 5'-nucleotidase SurE.